Here is a 196-residue protein sequence, read N- to C-terminus: Late protein I196L (196 aa).

A run of 2 repeats spans residues 28–48 and 49–70. The 3; approximate repeat unit spans residues 71–92; it reads SNYLTSAISTNISDKEEDTPFS.

It belongs to the asfivirus I196L family.

This is Late protein I196L from African swine fever virus (isolate Warthog/Namibia/Wart80/1980) (ASFV).